A 340-amino-acid polypeptide reads, in one-letter code: DNA-directed RNA polymerase subunit alpha (340 aa).

The segment at 1-233 is alpha N-terminal domain (alpha-NTD); that stretch reads MIQDEIKVST…DLFIPLINSE (233 aa). An alpha C-terminal domain (alpha-CTD) region spans residues 265–340; that stretch reads TKDVAFKHIF…IQLPKNKNYL (76 aa).

The protein belongs to the RNA polymerase alpha chain family. As to quaternary structure, in plastids the minimal PEP RNA polymerase catalytic core is composed of four subunits: alpha, beta, beta', and beta''. When a (nuclear-encoded) sigma factor is associated with the core the holoenzyme is formed, which can initiate transcription.

The protein localises to the plastid. It localises to the chloroplast. The enzyme catalyses RNA(n) + a ribonucleoside 5'-triphosphate = RNA(n+1) + diphosphate. Functionally, DNA-dependent RNA polymerase catalyzes the transcription of DNA into RNA using the four ribonucleoside triphosphates as substrates. The chain is DNA-directed RNA polymerase subunit alpha from Marchantia polymorpha (Common liverwort).